A 496-amino-acid chain; its full sequence is Nitric oxide synthase, inducible (496 aa).

FMN contacts are provided by Cys-6, Glu-32, and Gln-36. An FAD-binding FR-type domain is found at 101–341 (KNLFTMRLRS…VRSVSGFQLP (241 aa)). Arg-121 provides a ligand contact to NADP(+). His-143, Arg-277, Tyr-279, Ser-280, Thr-295, and Ala-297 together coordinate FAD. Residue Thr-300 coordinates NADP(+). FAD contacts are provided by Tyr-301, Val-314, Cys-315, and Ser-316. 8 residues coordinate NADP(+): Thr-355, Arg-388, Ser-417, Arg-418, Lys-424, Tyr-426, Gln-428, and Asp-461.

Belongs to the NOS family. As to quaternary structure, homodimer. Interacts with NHERF1. Interacts with GAPDH; induced by oxidatively-modified low-densitity lipoprotein (LDL(ox)). Interacts with S100A8 and S100A9 to form the iNOS-S100A8/9 transnitrosylase complex. Interacts with SPSB1, SPSB2 and SPSB4. Interacts with ELOC and CUL5 in the presence of SPSB1 or SPSB2 or SPSB4. Forms a complex with ASL, ASS1 and HSP90AA1; the complex regulates cell-autonomous L-arginine synthesis and citrulline recycling while channeling extracellular L-arginine to nitric oxide synthesis pathway. Heme b is required as a cofactor. It depends on FAD as a cofactor. Requires FMN as cofactor. The cofactor is (6R)-L-erythro-5,6,7,8-tetrahydrobiopterin. In terms of processing, polyubiquitinated; mediated by SPSB1, SPSB2 and SPSB4, leading to proteasomal degradation.

It localises to the cytoplasm. It is found in the cytosol. It carries out the reaction 2 L-arginine + 3 NADPH + 4 O2 + H(+) = 2 L-citrulline + 2 nitric oxide + 3 NADP(+) + 4 H2O. With respect to regulation, not stimulated by calcium/calmodulin. In terms of biological role, produces nitric oxide (NO) which is a messenger molecule with diverse functions throughout the body. In macrophages, NO mediates tumoricidal and bactericidal actions. Also has nitrosylase activity and mediates cysteine S-nitrosylation of cytoplasmic target proteins such PTGS2/COX2. As component of the iNOS-S100A8/9 transnitrosylase complex involved in the selective inflammatory stimulus-dependent S-nitrosylation of GAPDH implicated in regulation of the GAIT complex activity and probably multiple targets including ANXA5, EZR, MSN and VIM. Involved in inflammation, enhances the synthesis of pro-inflammatory mediators such as IL6 and IL8. The sequence is that of Nitric oxide synthase, inducible (NOS2) from Oryctolagus cuniculus (Rabbit).